A 757-amino-acid polypeptide reads, in one-letter code: MRFNQYSYINFPKENVLSELKKCGFDLQNTANHKDSLETFLRRFFFTYQDTNYPLSILAADKKTDLLTFFQSEDELTADIFYTVAFQLLGFSYLVDFEDSDVFRKETGFPIIYGDLIENLYQLLNTRTKKGNTLIDQLVSDGLIPEDNDYHYFNGKSLATFSNQDVIREVVYVESRVDTDQKGLSDLVKVSIIRPRFDGKIPAIMTASPYHQGTNDKASDKALYKMEGELEVKLPHKIELEKPQLNLVQPQGKAELIAEAEEKLTHINSSYTLNDYFLPRGFANLYVSGVGTKDSTGFMTNGDYQQIEAYKNVIDWLNGRCRAFTDHTRQRQVKADWSNGKVATTGLSYLGTMSNGLATTGVDGLEVIIAEAGISSWYNYYRENGLVTSPGGYPGEDFDSLAELTYSRNLLAGDYIRGNEAHQADLEKVKAQLDRKTGDYNQFWHDRNYLLNAHKVKAEVVFTHGSQDWNVKPLHVYQMFHALPTHIHKHLFFHNGAHVYMNNWQSIDFRESINALLTKKLLGQETDFQLPTVIWQDNTAPQTWLSLDNFGGQENCETFSLGQEEQAIQNQYPDKDFERYGKTYQTFNTELYQGKANQITINLPVTKDLHLNGRAQLNLRIKSSTNKGLLSAQLLEFGQKKYLQPYPAILSARTIDNGRYHMLENLCELPFRPEAQRVVTKGYLNLQNRNDLLLVEDITADEWMDVQFELQPTIYKLKEGDTLRLVLYTTDFEITIRDNTDYHLTVDLAQSMLTLPC.

Residues Ser-348, Asp-468, and His-498 each act as charge relay system in the active site.

The protein belongs to the peptidase S15 family. In terms of assembly, homodimer.

Its subcellular location is the cytoplasm. It catalyses the reaction Hydrolyzes Xaa-Pro-|- bonds to release unblocked, N-terminal dipeptides from substrates including Ala-Pro-|-p-nitroanilide and (sequentially) Tyr-Pro-|-Phe-Pro-|-Gly-Pro-|-Ile.. Functionally, removes N-terminal dipeptides sequentially from polypeptides having unsubstituted N-termini provided that the penultimate residue is proline. This Streptococcus pneumoniae serotype 19F (strain G54) protein is Xaa-Pro dipeptidyl-peptidase.